Consider the following 166-residue polypeptide: MSENEQFSQMEAKARARMKERGVEVSDIAELVFFLQKKYHPDLTIDECTLNVNRVLAKREVQNAILTGIELDVLAEQKKLSEPLQTMLEIDESLYGVDEVLAFSIVNIYGSIGFTNYGYIDKEKPGILKRLNDKSTGECHTFLDDIVGAISAAASSRLAHRARHTE.

The protein to B.subtilis YpjQ.

This is an uncharacterized protein from Bacillus subtilis (strain 168).